The primary structure comprises 310 residues: 17-beta-hydroxysteroid dehydrogenase type 3 (310 aa).

48–77 (GQWAVITGAGDGIGKAYSFELAKRGLNVVL) contacts NADP(+). Position 185 (serine 185) interacts with substrate. Catalysis depends on tyrosine 198, which acts as the Proton acceptor.

This sequence belongs to the short-chain dehydrogenases/reductases (SDR) family. 17-beta-HSD 3 subfamily. As to expression, testis.

Its subcellular location is the endoplasmic reticulum. The catalysed reaction is a 17beta-hydroxy steroid + NADP(+) = a 17-oxo steroid + NADPH + H(+). It catalyses the reaction testosterone + NADP(+) = androst-4-ene-3,17-dione + NADPH + H(+). The enzyme catalyses 17beta-estradiol + NADP(+) = estrone + NADPH + H(+). It carries out the reaction 3beta-hydroxyandrost-5-en-17-one + NADPH + H(+) = androst-5-en-3beta,17beta-diol + NADP(+). The catalysed reaction is 17beta-hydroxy-5alpha-androstan-3-one + NADP(+) = 5alpha-androstan-3,17-dione + NADPH + H(+). It catalyses the reaction androsterone + NADPH + H(+) = 5alpha-androstane-3alpha,17beta-diol + NADP(+). The enzyme catalyses 3beta-hydroxy-5alpha-androstan-17-one + NADPH + H(+) = 5alpha-androstane-3beta,17beta-diol + NADP(+). It carries out the reaction androst-4-ene-3,11,17-trione + NADPH + H(+) = 17beta-hydroxyandrost-4-ene-3,11-dione + NADP(+). The catalysed reaction is 11beta-hydroxyandrost-4-ene-3,17-dione + NADPH + H(+) = 11beta,17beta-dihydroxyandrost-4-ene-3-one + NADP(+). The protein operates within hormone biosynthesis; testosterone biosynthesis. It functions in the pathway steroid metabolism. In terms of biological role, catalyzes the conversion of 17-oxosteroids to 17beta-hydroxysteroids. Favors the reduction of androstenedione to testosterone. Testosterone is the key androgen driving male development and function. Uses NADPH while the two other EDH17B enzymes use NADH. Androgens such as epiandrosterone, dehydroepiandrosterone, androsterone and androstanedione are accepted as substrates and reduced at C-17. Can reduce 11-ketoandrostenedione as well as 11beta-hydroxyandrostenedione at C-17 to the respective testosterone forms. The sequence is that of 17-beta-hydroxysteroid dehydrogenase type 3 from Homo sapiens (Human).